Here is a 508-residue protein sequence, read N- to C-terminus: MANDYPSSDEEIMEAQTGSRKRRKTSSDSESDTAPRAPTATSISRVKPAKDRAGHQAASRVAVSKASVPEENGKEKVSFASIDVAPWLVASLASMEIKRPTGIQKACIPEILKGRDCIGGSRTGTGKTVAFSVPILQKWAEDPSGIFGLIITPTRELAIQIYEQVKAISAPQSMKPILVTGGSDQREQAIALASRPHVVIATPGRLAEHIKTSGEDTICGLRRVRFVVFDEADRLLAPGRGSMIPDIETCLSVLPPKEQRQTLLFTATVTPEVLALKSQPRAPGRLPIFVCEVDTETLATPASLSQLYLQTPVTHKECYLHVLLLTPLNLTKSVIIFCNRTKTATLLEYMLRMLDHRVTALHSGLKQQDRISNLARFRAQAARILVATDVAARGLDIPEVGLVVNFDVPRDPDDYIHRVGRTARAGRPGNSVTFIGQRDVELVLAIEERVGGKMSEFEEEGVSVEGRVVRDALKIVTEKKREALLNIEEGRDVKGNRMVGMKKRRVVE.

The segment at 1–68 (MANDYPSSDE…SRVAVSKASV (68 aa)) is disordered. Over residues 57 to 67 (AASRVAVSKAS) the composition is skewed to low complexity. Residues 77–105 (VSFASIDVAPWLVASLASMEIKRPTGIQK) carry the Q motif motif. The region spanning 108–287 (IPEILKGRDC…SQPRAPGRLP (180 aa)) is the Helicase ATP-binding domain. 121-128 (SRTGTGKT) serves as a coordination point for ATP. The DEAD box signature appears at 230 to 233 (DEAD). The region spanning 323 to 465 (LLLTPLNLTK…EFEEEGVSVE (143 aa)) is the Helicase C-terminal domain.

The protein belongs to the DEAD box helicase family. DDX49/DBP8 subfamily.

The protein localises to the nucleus. The protein resides in the nucleolus. It carries out the reaction ATP + H2O = ADP + phosphate + H(+). ATP-binding RNA helicase involved in 40S ribosomal subunit biogenesis and is required for the normal formation of 18S rRNAs through pre-rRNA processing at A0, A1 and A2 sites. Required for vegetative growth. The chain is ATP-dependent RNA helicase DBP8 (DBP8) from Phaeosphaeria nodorum (strain SN15 / ATCC MYA-4574 / FGSC 10173) (Glume blotch fungus).